Reading from the N-terminus, the 656-residue chain is L-type lectin-domain containing receptor kinase S.1 (656 aa).

A signal peptide spans 1 to 29; sequence MSWQWRRRQWPSPLLLILIVLHLVSSSSA. The segment at 30-273 is legume-lectin like; the sequence is IDFLYNSFSS…ARRILAWSLS (244 aa). Residues 30–304 lie on the Extracellular side of the membrane; sequence IDFLYNSFSS…SSSLSTGAIA (275 aa). 8 N-linked (GlcNAc...) asparagine glycosylation sites follow: N42, N63, N121, N139, N191, N219, N282, and N293. Residues 305 to 325 traverse the membrane as a helical segment; that stretch reads GIVIGCVVFVALIGFGGYLIW. Topologically, residues 326-656 are cytoplasmic; that stretch reads KKLMREEEEE…AAADSTAAHA (331 aa). Residues 361-639 form the Protein kinase domain; that stretch reads FSNDRLLGSG…LLGSPQEDLL (279 aa). Residues 367-375 and K389 each bind ATP; that span reads LGSGGFGKV. The active-site Proton acceptor is D485.

This sequence in the C-terminal section; belongs to the protein kinase superfamily. Ser/Thr protein kinase family. The protein in the N-terminal section; belongs to the leguminous lectin family.

Its subcellular location is the cell membrane. The catalysed reaction is L-seryl-[protein] + ATP = O-phospho-L-seryl-[protein] + ADP + H(+). The enzyme catalyses L-threonyl-[protein] + ATP = O-phospho-L-threonyl-[protein] + ADP + H(+). Functionally, involved in resistance response to the pathogenic oomycetes Phytophthora infestans and Phytophthora capsici and to the pathogenic bacteria Pseudomonas syringae. The chain is L-type lectin-domain containing receptor kinase S.1 from Arabidopsis thaliana (Mouse-ear cress).